A 303-amino-acid chain; its full sequence is MADLSVNIGKLQMKNPVMTASGTFGYGEEFADFIDITRIGGIIVKGTTLHKREGNPYPRMAETPSGMLNAVGLQNKGVEYFSNHIYPRIKDIQTHMIVNVSGSAIEDYVKTAEIINELDKIPAIELNISCPNVKQGGMAFGVTTKGVSEVVQAVRSAYKKTLIVKLSPNVTDIAEMARAAEANGADSVSLINTLLGMAIDAERKRPILSTVTGGMSGAAVKPIALRMVWQVAKAVNIPVIGLGGIMNWKDAVEFMLAGASAIQIGTANFIDPAITIKVIDGINDYLERHGCKSVSEIIGALEV.

FMN is bound by residues Ser21 and 45–46 (KG). Residues Lys45 and 69 to 73 (NAVGL) contribute to the substrate site. 2 residues coordinate FMN: Asn99 and Asn127. Asn127 lines the substrate pocket. Catalysis depends on Cys130, which acts as the Nucleophile. Lys165 and Ile191 together coordinate FMN. Residue 192–193 (NT) coordinates substrate. Residues Gly217, 243–244 (GG), and 265–266 (GT) contribute to the FMN site.

This sequence belongs to the dihydroorotate dehydrogenase family. Type 1 subfamily. As to quaternary structure, heterotetramer of 2 PyrK and 2 PyrD type B subunits. It depends on FMN as a cofactor.

The protein resides in the cytoplasm. It catalyses the reaction (S)-dihydroorotate + NAD(+) = orotate + NADH + H(+). It functions in the pathway pyrimidine metabolism; UMP biosynthesis via de novo pathway; orotate from (S)-dihydroorotate (NAD(+) route): step 1/1. Functionally, catalyzes the conversion of dihydroorotate to orotate with NAD(+) as electron acceptor. This chain is Dihydroorotate dehydrogenase B (NAD(+)), catalytic subunit (pyrD), found in Bacteroides fragilis (strain ATCC 25285 / DSM 2151 / CCUG 4856 / JCM 11019 / LMG 10263 / NCTC 9343 / Onslow / VPI 2553 / EN-2).